The primary structure comprises 420 residues: Sulfate adenylyltransferase (420 aa).

Position 2 is an N-acetylalanine (alanine 2).

Belongs to the sulfate adenylyltransferase family. Requires Mg(2+) as cofactor.

It carries out the reaction sulfate + ATP + H(+) = adenosine 5'-phosphosulfate + diphosphate. Its pathway is sulfur metabolism; hydrogen sulfide biosynthesis; sulfite from sulfate: step 1/3. With respect to regulation, inhibited by adenosine 5'-phosphosulfate (APS), but not by 3'phosphoadenosine 5'-phosphosulfate (PAPS). Inhibited by AMP, ADP, CTP, GTP, ITP, UTP and anions other than those in group IV. The chain is Sulfate adenylyltransferase from Pyropia yezoensis (Susabi-nori).